Consider the following 833-residue polypeptide: G-type lectin S-receptor-like serine/threonine-protein kinase RKS1 (833 aa).

The first 18 residues, 1–18 (MKVVFVIFFFFLFQFCIS), serve as a signal peptide directing secretion. The 126-residue stretch at 19 to 144 (VDTIMRRQSL…VTGRSFWESF (126 aa)) folds into the Bulb-type lectin domain. Topologically, residues 19-440 (VDTIMRRQSL…NGLSGKRRVL (422 aa)) are extracellular. N-linked (GlcNAc...) asparagine glycans are attached at residues asparagine 79, asparagine 92, asparagine 100, asparagine 109, asparagine 228, and asparagine 256. Positions 280 to 330 (PKEQCDNYAHCGPNGYCDSPSSKTFECTCLPGFEPKFPRHWFLRDSSGGCT) constitute an EGF-like domain. 3 disulfide bridges follow: cysteine 284/cysteine 296, cysteine 290/cysteine 306, and cysteine 308/cysteine 329. Residues 338-421 (CSEKDGFVKL…SGQDFYIRVD (84 aa)) enclose the PAN domain. N-linked (GlcNAc...) asparagine glycosylation is found at asparagine 363 and asparagine 376. Disulfide bonds link cysteine 369-cysteine 396 and cysteine 373-cysteine 379. The chain crosses the membrane as a helical span at residues 441 to 461 (LILISLIAAVMLLTVILFCVV). Residues 462–833 (RERRKSNRHR…DVTFSDIQGR (372 aa)) lie on the Cytoplasmic side of the membrane. In terms of domain architecture, Protein kinase spans 515-800 (FSSQNKLGAG…NLPNPKHPAF (286 aa)). Residues 521 to 529 (LGAGGFGPV) and lysine 543 each bind ATP. Phosphoserine occurs at positions 549 and 564. A caM-binding region spans residues 604-621 (EQRAELDWPKRMEIVRGI). Catalysis depends on aspartate 640, which acts as the Proton acceptor. Phosphoserine is present on residues serine 644 and serine 657. At threonine 674 the chain carries Phosphothreonine. A phosphoserine mark is found at serine 717 and serine 821.

Belongs to the protein kinase superfamily. Ser/Thr protein kinase family.

The protein localises to the cell membrane. The catalysed reaction is L-seryl-[protein] + ATP = O-phospho-L-seryl-[protein] + ADP + H(+). It carries out the reaction L-threonyl-[protein] + ATP = O-phospho-L-threonyl-[protein] + ADP + H(+). This Arabidopsis thaliana (Mouse-ear cress) protein is G-type lectin S-receptor-like serine/threonine-protein kinase RKS1 (RKS1).